The following is a 109-amino-acid chain: MSYQEQQCKQVCQPPLVCPPRSAQSPVLCQSAPSLVLLQSAQSPIHCQSALSHAHLSHASRNALLCNLLHHASKSAHPRANKGFSSLQNQKKRTESILHKSIATPPSSI.

A run of 5 repeats spans residues 21 to 29, 30 to 38, 39 to 47, 48 to 56, and 57 to 65. Residues 21–65 are 5 X 9 AA approximate tandem repeats; it reads RSAQSPVLCQSAPSLVLLQSAQSPIHCQSALSHAHLSHASRNALL. Residues 76 to 109 are disordered; the sequence is AHPRANKGFSSLQNQKKRTESILHKSIATPPSSI.

This sequence belongs to the cornifin (SPRR) family. As to expression, not expressed in uterus.

The protein localises to the cytoplasm. Cross-linked envelope protein of keratinocytes. It is a keratinocyte protein that first appears in the cell cytosol, but ultimately becomes cross-linked to membrane proteins by transglutaminase. All that results in the formation of an insoluble envelope beneath the plasma membrane. The chain is Putative small proline-rich protein 2J (Sprr2j) from Mus musculus (Mouse).